Reading from the N-terminus, the 479-residue chain is UDP-N-acetylmuramoyl-L-alanyl-D-glutamate--2,6-diaminopimelate ligase (479 aa).

Ser-21 is a UDP-N-acetyl-alpha-D-muramoyl-L-alanyl-D-glutamate binding site. An ATP-binding site is contributed by Gly-98 to Ser-104. Residues Thr-144–Thr-145, Ser-171, Gln-177, and Arg-179 each bind UDP-N-acetyl-alpha-D-muramoyl-L-alanyl-D-glutamate. An N6-carboxylysine modification is found at Lys-211. Meso-2,6-diaminopimelate contacts are provided by residues Arg-372, Asp-396 to Arg-399, Gly-446, and Glu-450. Residues Asp-396–Arg-399 carry the Meso-diaminopimelate recognition motif motif.

It belongs to the MurCDEF family. MurE subfamily. Requires Mg(2+) as cofactor. Post-translationally, carboxylation is probably crucial for Mg(2+) binding and, consequently, for the gamma-phosphate positioning of ATP.

It is found in the cytoplasm. It catalyses the reaction UDP-N-acetyl-alpha-D-muramoyl-L-alanyl-D-glutamate + meso-2,6-diaminopimelate + ATP = UDP-N-acetyl-alpha-D-muramoyl-L-alanyl-gamma-D-glutamyl-meso-2,6-diaminopimelate + ADP + phosphate + H(+). It functions in the pathway cell wall biogenesis; peptidoglycan biosynthesis. In terms of biological role, catalyzes the addition of meso-diaminopimelic acid to the nucleotide precursor UDP-N-acetylmuramoyl-L-alanyl-D-glutamate (UMAG) in the biosynthesis of bacterial cell-wall peptidoglycan. This chain is UDP-N-acetylmuramoyl-L-alanyl-D-glutamate--2,6-diaminopimelate ligase, found in Rickettsia montanensis.